The sequence spans 156 residues: SsrA-binding protein (156 aa).

This sequence belongs to the SmpB family.

Its subcellular location is the cytoplasm. In terms of biological role, required for rescue of stalled ribosomes mediated by trans-translation. Binds to transfer-messenger RNA (tmRNA), required for stable association of tmRNA with ribosomes. tmRNA and SmpB together mimic tRNA shape, replacing the anticodon stem-loop with SmpB. tmRNA is encoded by the ssrA gene; the 2 termini fold to resemble tRNA(Ala) and it encodes a 'tag peptide', a short internal open reading frame. During trans-translation Ala-aminoacylated tmRNA acts like a tRNA, entering the A-site of stalled ribosomes, displacing the stalled mRNA. The ribosome then switches to translate the ORF on the tmRNA; the nascent peptide is terminated with the 'tag peptide' encoded by the tmRNA and targeted for degradation. The ribosome is freed to recommence translation, which seems to be the essential function of trans-translation. In Maricaulis maris (strain MCS10) (Caulobacter maris), this protein is SsrA-binding protein.